Reading from the N-terminus, the 443-residue chain is Chorionicgonadotropic hormone-like protein (443 aa).

Residues arginine 263–methionine 286 are compositionally biased toward basic residues. The segment at arginine 263–aspartate 292 is disordered.

This sequence to mammalian CGHB.

It localises to the secreted. The protein localises to the cell wall. Its function is as follows. Cell wall protein that resembles the beta subunit of human chorionic gonadotropin. Stimulates growth and change in morphology. The sequence is that of Chorionicgonadotropic hormone-like protein (xcg) from Stenotrophomonas maltophilia (Pseudomonas maltophilia).